The primary structure comprises 237 residues: MDFLYPYPPLISGILVKRYKRFLADVELDNGEIVTAHCPNTGPMTGVCQVGAQVYLSKSDNPQRKLAYTWEMIQIDGTWVGVNTALPNRVIKQALADRIFPNLTNSYDTFKPEVPYGKDKKSRIDFLLTKPEEKSIYVEVKNTTLSQEKLALFPDTETTRGQKHLQELIDILPTARAVMLYFINRGDCTHFSPGDAYDRRYGELFRQAIAAGVEVMPCRFMVNPEGVKFLGMAELVV.

The protein belongs to the SfsA family.

The protein is Sugar fermentation stimulation protein homolog of Synechocystis sp. (strain ATCC 27184 / PCC 6803 / Kazusa).